The chain runs to 1369 residues: Phospholipase D1 (1369 aa).

Disordered regions lie at residues 27–90 and 318–340; these read YSEK…SSWH and ESHS…GRKK. Residues 31 to 53 are compositionally biased toward basic and acidic residues; the sequence is GTGRKDAEDHTPSKITDLEKNVD. Residues 208 to 379 form the PX domain; the sequence is TDLIKVSVLD…NVLYSFLEFS (172 aa). PLD phosphodiesterase domains follow at residues 641–668 and 941–968; these read LFWA…CFGR and EMIY…NERS. The segment covering 1277–1289 has biased composition (basic and acidic residues); that stretch reads HETHEKSENDPKN. Residues 1277 to 1320 are disordered; the sequence is HETHEKSENDPKNPKAGSQGSGNTSASEDSKTEKPKTRTNNGLQ. Polar residues predominate over residues 1292-1303; sequence AGSQGSGNTSAS.

It belongs to the phospholipase D family.

Its subcellular location is the cytoplasm. The enzyme catalyses a 1,2-diacyl-sn-glycero-3-phosphocholine + H2O = a 1,2-diacyl-sn-glycero-3-phosphate + choline + H(+). Its activity is regulated as follows. Activity is slightly stimulated by oleate. Required for meiosis and spore formation. Seems to be involved in the coordinate induction of late meiotic events. This Schizosaccharomyces pombe (strain 972 / ATCC 24843) (Fission yeast) protein is Phospholipase D1 (pld1).